The chain runs to 141 residues: Putative antirestriction protein YubI (141 aa).

It belongs to the antirestriction protein family.

The chain is Putative antirestriction protein YubI (yubI) from Escherichia coli (strain K12).